Here is a 70-residue protein sequence, read N- to C-terminus: Large ribosomal subunit protein bL31 (70 aa).

The Zn(2+) site is built by Cys-16, Cys-18, Cys-37, and Cys-40.

Belongs to the bacterial ribosomal protein bL31 family. Type A subfamily. As to quaternary structure, part of the 50S ribosomal subunit. The cofactor is Zn(2+).

Its function is as follows. Binds the 23S rRNA. The polypeptide is Large ribosomal subunit protein bL31 (Desulfovibrio desulfuricans (strain ATCC 27774 / DSM 6949 / MB)).